A 370-amino-acid polypeptide reads, in one-letter code: Acyl-CoA:lysophosphatidylglycerol acyltransferase 1 (370 aa).

The chain crosses the membrane as a helical span at residues 22–42 (FAFMVVNNLVAIPSYICYVII). An HXXXXD motif motif is present at residues 101–106 (HQATGD). Residues 342–362 (LWIFLIQSFAFLSGYMWYNII) traverse the membrane as a helical segment.

This sequence belongs to the 1-acyl-sn-glycerol-3-phosphate acyltransferase family. Highly expressed in liver and placenta. Also expressed in peripheral blood, lung, kidney and brain. Detected at lower levels in colon. High expression is detected in brain and testis.

It localises to the endoplasmic reticulum membrane. The catalysed reaction is a 2-acyl-sn-glycero-3-phosphoethanolamine + octadecanoyl-CoA = 1-octadecanoyl-2-acyl-sn-glycero-3-phosphoethanolamine + CoA. It catalyses the reaction 2-(9Z-octadecenoyl)-sn-glycero-3-phosphoethanolamine + octadecanoyl-CoA = 1-octadecanoyl-2-(9Z-octadecenoyl)-sn-glycero-3-phosphoethanolamine + CoA. The enzyme catalyses a 2-acyl-sn-glycero-3-phosphoethanolamine + hexadecanoyl-CoA = 1-hexadecanoyl-2-acyl-sn-glycero-3-phosphoethanolamine + CoA. It carries out the reaction 2-(9Z-octadecenoyl)-sn-glycero-3-phosphoethanolamine + hexadecanoyl-CoA = 1-hexadecanoyl-2-(9Z-octadecenoyl)-sn-glycero-3-phosphoethanolamine + CoA. The catalysed reaction is 1-tetradecanoyl-sn-glycero-3-phospho-(1'-sn-glycerol) + hexadecanoyl-CoA = 1-tetradecanoyl-2-hexadecanoyl-sn-glycero-3-phospho-(1'-sn-glycerol) + CoA. It catalyses the reaction 1-hexadecanoyl-sn-glycero-3-phospho-(1'-sn-glycerol) + dodecanoyl-CoA = 1-hexadecanoyl-2-dodecanoyl-sn-glycero-3-phospho-(1'-sn-glycerol) + CoA. The enzyme catalyses 1-hexadecanoyl-sn-glycero-3-phospho-(1'-sn-glycerol) + hexadecanoyl-CoA = 1,2-dihexadecanoyl-sn-glycero-3-phospho-(1'-sn-glycerol) + CoA. It carries out the reaction 1-hexadecanoyl-sn-glycero-3-phospho-(1'-sn-glycerol) + octadecanoyl-CoA = 1-hexadecanoyl-2-octadecanoyl-sn-glycero-3-phospho-(1'-sn-glycerol) + CoA. The catalysed reaction is 1-octadecanoyl-sn-glycero-3-phospho-(1'-sn-glycerol) + hexadecanoyl-CoA = 1-octadecanoyl-2-hexadecanoyl-sn-glycero-3-phospho-(1'-sn-glycerol) + CoA. It catalyses the reaction 1-(9Z-octadecenoyl)-sn-glycero-3-phospho-(1'-sn-glycerol) + dodecanoyl-CoA = 1-(9Z-octadecenoyl)-2-dodecanoyl-sn-glycero-3-phospho-(1'-sn-glycerol) + CoA. The enzyme catalyses 1-hexadecanoyl-sn-glycero-3-phospho-(1'-sn-glycerol) + (9Z)-octadecenoyl-CoA = 1-hexadecanoyl-2-(9Z-octadecenoyl)-sn-glycero-3-phospho-(1'-sn-glycerol) + CoA. It carries out the reaction 1-(9Z-octadecenoyl)-sn-glycero-3-phospho-(1'-sn-glycerol) + hexadecanoyl-CoA = 1-(9Z-octadecenoyl)-2-hexadecanoyl-sn-glycero-3-phospho-(1'-sn-glycerol) + CoA. The catalysed reaction is 1-(9Z-octadecenoyl)-sn-glycero-3-phospho-(1'-sn-glycerol) + (9Z)-octadecenoyl-CoA = 1,2-di-(9Z-octadecenoyl)-sn-glycero-3-phospho-(1'-sn-glycerol) + CoA. It catalyses the reaction a 2-acylglycerol + an acyl-CoA = a 1,2-diacylglycerol + CoA. The enzyme catalyses a 2-acylglycerol + hexadecanoyl-CoA = a 1-hexadecanoyl-2-acylglycerol + CoA. It carries out the reaction a 1-acylglycerol + hexadecanoyl-CoA = an hexadecanoyl-acylglycerol + CoA. The catalysed reaction is a 2-acyl-sn-glycero-3-phosphocholine + an acyl-CoA = a 1,2-diacyl-sn-glycero-3-phosphocholine + CoA. It catalyses the reaction 2-(9Z-octadecenoyl)-sn-glycero-3-phosphocholine + octadecanoyl-CoA = 1-octadecanoyl-2-(9Z-octadecenoyl)-sn-glycero-3-phosphocholine + CoA. The enzyme catalyses 2-(9Z,12Z-octadecadienoyl)-sn-glycero-3-phosphocholine + octadecanoyl-CoA = 1-octadecanoyl-2-(9Z,12Z)-octadecadienoyl-sn-glycero-3-phosphocholine + CoA. It carries out the reaction 2-(5Z,8Z,11Z,14Z)-eicosatetraenoyl-sn-glycero-3-phosphocholine + octadecanoyl-CoA = 1-octadecanoyl-2-(5Z,8Z,11Z,14Z-eicosatetraenoyl)-sn-glycero-3-phosphocholine + CoA. The catalysed reaction is 2-(9Z-octadecenoyl)-sn-glycero-3-phosphocholine + hexadecanoyl-CoA = 1-hexadecanoyl-2-(9Z-octadecenoyl)-sn-glycero-3-phosphocholine + CoA. It catalyses the reaction 2-(9Z-octadecenoyl)-sn-glycero-3-phospho-L-serine + hexadecanoyl-CoA = 1-hexadecanoyl-2-(9Z-octadecenoyl)-sn-glycero-3-phospho-L-serine + CoA. The enzyme catalyses 2-(4Z,7Z,10Z,13Z,16Z,19Z-docosahexaenoyl)-sn-glycero-3-phosphocholine + octadecanoyl-CoA = 1-octadecanoyl-2-(4Z,7Z,10Z,13Z,16Z,19Z-docosahexaenoyl)-sn-glycero-3-phosphocholine + CoA. It carries out the reaction 1-(9Z-octadecenoyl)-sn-glycero-3-phospho-L-serine + octadecanoyl-CoA = 1-(9Z-octadecenoyl)-2-octadecanoyl-sn-glycero-3-phospho-L-serine + CoA. The catalysed reaction is a 2-acyl-sn-glycero-3-phosphoethanolamine + a fatty acyl-CoA = a 1,2-diacyl-sn-glycero-3-phosphoethanolamine + CoA. Lysophospholipid acyltransferase involved in fatty acyl chain remodeling of glycerophospholipids in the endoplasmic reticulum membrane. Selectively catalyzes the transfer and esterification of saturated long-chain fatty acids from acyl-CoA to the sn-1 position of 1-lyso-2-acyl phosphatidylethanolamines (1-lyso-PE, LPE), with a preference for stearoyl CoA over palmitoyl CoA as acyl donor. Acts in concert with an unknown phospholipase A1 to convert palmitate phosphatidylethanolamine (PE) species into stearate ones. Provides substrates to the PE methylation pathway, controlling stearate/palmitate composition of PE and phosphatidylcholine (PC) species with an overall impact on de novo hepatic lipid synthesis, body fat content and life span. Can acylate lysophosphatidylglycerols (LPG) using various saturated fatty acyl-CoAs as acyl donors. Can also acylate monoacylglycerols with a preference for 2-monoacylglycerols over 1-monoacylglycerols. Has no activity toward lysophosphatidic acids (LPA). In Homo sapiens (Human), this protein is Acyl-CoA:lysophosphatidylglycerol acyltransferase 1.